The sequence spans 409 residues: Tyrosine--tRNA ligase (409 aa).

The 'HIGH' region motif lies at proline 43–histidine 52. Residues lysine 227 to serine 231 carry the 'KMSKS' region motif. Residue lysine 230 participates in ATP binding. The S4 RNA-binding domain occupies leucine 338 to leucine 399.

Belongs to the class-I aminoacyl-tRNA synthetase family. TyrS type 2 subfamily. In terms of assembly, homodimer.

It is found in the cytoplasm. The enzyme catalyses tRNA(Tyr) + L-tyrosine + ATP = L-tyrosyl-tRNA(Tyr) + AMP + diphosphate + H(+). In terms of biological role, catalyzes the attachment of tyrosine to tRNA(Tyr) in a two-step reaction: tyrosine is first activated by ATP to form Tyr-AMP and then transferred to the acceptor end of tRNA(Tyr). The polypeptide is Tyrosine--tRNA ligase (Nitrosomonas europaea (strain ATCC 19718 / CIP 103999 / KCTC 2705 / NBRC 14298)).